The primary structure comprises 53 residues: Snake venom serine protease LmrSP-4 (53 aa).

A disulfide bridge connects residues Cys26 and Cys42. The active-site Charge relay system is the His41.

In terms of assembly, monomer. N-glycosylated. As to expression, expressed by the venom gland.

It localises to the secreted. Its activity is regulated as follows. Inhibited by the small molecule serine protease inhibitors phenylmethylsulfonyl fluoride (PMSF) and benzamidine. In terms of biological role, snake venom serine protease that has fibrinogenolytic activity. Hydrolyzes the alpha-chain of fibrinogen (FGA), without affecting the beta- and the gamma-chains. Also displays hydrolytic activity towards S-2302 (plasma kallikrein substrate) and S-2251 (substrate for plasmin), but has no hydrolytic activity with S-2238 (thrombin substrate) or S-2222 (factor Xa). The polypeptide is Snake venom serine protease LmrSP-4 (Lachesis muta rhombeata (Bushmaster)).